Reading from the N-terminus, the 510-residue chain is Histidine ammonia-lyase (510 aa).

The 5-imidazolinone (Ala-Gly) cross-link spans 143–145 (ASG). A 2,3-didehydroalanine (Ser) modification is found at S144.

The protein belongs to the PAL/histidase family. Post-translationally, contains an active site 4-methylidene-imidazol-5-one (MIO), which is formed autocatalytically by cyclization and dehydration of residues Ala-Ser-Gly.

It is found in the cytoplasm. It catalyses the reaction L-histidine = trans-urocanate + NH4(+). Its pathway is amino-acid degradation; L-histidine degradation into L-glutamate; N-formimidoyl-L-glutamate from L-histidine: step 1/3. In Psychromonas ingrahamii (strain DSM 17664 / CCUG 51855 / 37), this protein is Histidine ammonia-lyase.